The following is a 253-amino-acid chain: MQIRKVKISKVKDGYRASSEDFVAVEEPLQIFVNEKNLAIIMRTPGNDLELTLGFLYYEDYINSLRDVEEISMLSDNEIHVRLTNGKFVETRNFVINSSCGICGRGFLNAIELLKSDAKTSNEVIISLPEKLRSNQGVFNITGGLHAAALFTLSGELISIYEDVGRHNAVDKIIGSLIHKRRLPFTEGILQVSGRIGYEIVSKAIKAGIPIISGISAPTSKAIEIAEDAGATLVGFVRGNSFNVYTHPERIDL.

Cys100 functions as the Cysteine persulfide intermediate in the catalytic mechanism.

Belongs to the FdhD family.

The protein localises to the cytoplasm. Functionally, required for formate dehydrogenase (FDH) activity. Acts as a sulfur carrier protein that transfers sulfur from IscS to the molybdenum cofactor prior to its insertion into FDH. The protein is Sulfur carrier protein FdhD of Sulfolobus acidocaldarius (strain ATCC 33909 / DSM 639 / JCM 8929 / NBRC 15157 / NCIMB 11770).